We begin with the raw amino-acid sequence, 132 residues long: Large ribosomal subunit protein uL14 (132 aa).

The protein belongs to the universal ribosomal protein uL14 family. Part of the 50S ribosomal subunit. Forms a cluster with proteins L3 and L24e, part of which may contact the 16S rRNA in 2 intersubunit bridges.

Functionally, binds to 23S rRNA. Forms part of two intersubunit bridges in the 70S ribosome. The sequence is that of Large ribosomal subunit protein uL14 from Methanosphaera stadtmanae (strain ATCC 43021 / DSM 3091 / JCM 11832 / MCB-3).